Reading from the N-terminus, the 419-residue chain is MEQTPLTYLKQQDEELFSAMRKELKRQRDNIELIASENFVSQAVMEAQGSVLTNKYAEGYPGRRYYGGCEFVDLAENLARDRAKAIFGAEHVNVQPHSGAQANMAVYFTILNQGDTVLGMNLSHGGHLTHGSPVNFSGVQYNFVEYGVDPETEMIDYDVVAKLAEEHKPKLIVAGASAYPRVIDFKRFREIADSVGAYLMVDMAHIAGLVAAGLHPNPVEHAHFVTTTTHKTLRGPRGGMILCKEEHAKAIDKSIFPGIQGGPLMHVIAAKAVAFAEALAPEFKDYIEQVVANAKVLGEELTARGLRIVSGGTDNHLLLVDLQPLGITGKLAEHALDEAGITVNKNTIPFDPASPFVTSGIRIGTAAMTSRGFKEAEMKQIAELIELVLKNPEDQETLTSAHKQVLALTGRFPLYPERG.

Residues leucine 122 and 126-128 (GHL) each bind (6S)-5,6,7,8-tetrahydrofolate. The residue at position 231 (lysine 231) is an N6-(pyridoxal phosphate)lysine. 354-356 (SPF) lines the (6S)-5,6,7,8-tetrahydrofolate pocket.

It belongs to the SHMT family. As to quaternary structure, homodimer. It depends on pyridoxal 5'-phosphate as a cofactor.

The protein resides in the cytoplasm. The catalysed reaction is (6R)-5,10-methylene-5,6,7,8-tetrahydrofolate + glycine + H2O = (6S)-5,6,7,8-tetrahydrofolate + L-serine. Its pathway is one-carbon metabolism; tetrahydrofolate interconversion. It functions in the pathway amino-acid biosynthesis; glycine biosynthesis; glycine from L-serine: step 1/1. Its function is as follows. Catalyzes the reversible interconversion of serine and glycine with tetrahydrofolate (THF) serving as the one-carbon carrier. This reaction serves as the major source of one-carbon groups required for the biosynthesis of purines, thymidylate, methionine, and other important biomolecules. Also exhibits THF-independent aldolase activity toward beta-hydroxyamino acids, producing glycine and aldehydes, via a retro-aldol mechanism. This Exiguobacterium sibiricum (strain DSM 17290 / CCUG 55495 / CIP 109462 / JCM 13490 / 255-15) protein is Serine hydroxymethyltransferase.